The primary structure comprises 234 residues: MGQKVNPVGLRLGINRNWTSRWFPSTRTAPSNIDEDNKIRKFLKKELYYAGVSEIVIERAAKKLRVTVVAARPGLIIGKKGVDIEKVKEGLKTLIKKEVSINIKEVKRPQADAQLAAENVATQLEKRVAFRRAMKKVMQAALKSGAKGIKVRVSGRLAGAEIARTEWYMEGRVPLHTLRAKIDYGFAEAMTVYGIIGVKVWIFKGEVLQKGIQFEKKEEAKEEREPRRSRRGRQ.

The KH type-2 domain occupies 39–107; the sequence is IRKFLKKELY…EVSINIKEVK (69 aa).

Belongs to the universal ribosomal protein uS3 family. In terms of assembly, part of the 30S ribosomal subunit. Forms a tight complex with proteins S10 and S14.

Binds the lower part of the 30S subunit head. Binds mRNA in the 70S ribosome, positioning it for translation. In Helicobacter pylori (strain J99 / ATCC 700824) (Campylobacter pylori J99), this protein is Small ribosomal subunit protein uS3.